A 166-amino-acid polypeptide reads, in one-letter code: MSLPEKAFPVSWDQFHRDARALSWRLSGANKGQWKAIVCITRGGLVPAAIIARELGIRVIETVCVASYHDYTSQGQLQVLKEITPALLADDGAGVLIIDDLTDTGKTAGIVRAMMPKAHFATVYAKPKGRPLVDTFVTEVSQDTWIYFPWDMGFTYQKPIADDHAG.

5-phospho-alpha-D-ribose 1-diphosphate is bound by residues 42–43 (RG) and 99–107 (DDLTDTGKT). Aspartate 100 contacts Mg(2+). Positions 103 and 146 each coordinate guanine. Residues aspartate 103 and isoleucine 146 each contribute to the xanthine site. Residues 103 to 107 (DTGKT) and 145 to 146 (WI) each bind GMP.

Belongs to the purine/pyrimidine phosphoribosyltransferase family. XGPT subfamily. In terms of assembly, homotetramer. Requires Mg(2+) as cofactor.

The protein localises to the cell inner membrane. The enzyme catalyses GMP + diphosphate = guanine + 5-phospho-alpha-D-ribose 1-diphosphate. It carries out the reaction XMP + diphosphate = xanthine + 5-phospho-alpha-D-ribose 1-diphosphate. The catalysed reaction is IMP + diphosphate = hypoxanthine + 5-phospho-alpha-D-ribose 1-diphosphate. Its pathway is purine metabolism; GMP biosynthesis via salvage pathway; GMP from guanine: step 1/1. It participates in purine metabolism; XMP biosynthesis via salvage pathway; XMP from xanthine: step 1/1. Its function is as follows. Purine salvage pathway enzyme that catalyzes the transfer of the ribosyl-5-phosphate group from 5-phospho-alpha-D-ribose 1-diphosphate (PRPP) to the N9 position of the 6-oxopurines guanine and xanthine to form the corresponding ribonucleotides GMP (guanosine 5'-monophosphate) and XMP (xanthosine 5'-monophosphate), with the release of PPi. To a lesser extent, also acts on hypoxanthine. This chain is Xanthine-guanine phosphoribosyltransferase, found in Mesorhizobium japonicum (strain LMG 29417 / CECT 9101 / MAFF 303099) (Mesorhizobium loti (strain MAFF 303099)).